The sequence spans 481 residues: Zinc metalloproteinase/disintegrin (481 aa).

The first 20 residues, 1–20, serve as a signal peptide directing secretion; the sequence is MIQVLLVTICLAVFPYQGSS. The propeptide occupies 21 to 190; the sequence is IILESGNVDD…KASQLYLTPE (170 aa). The region spanning 197–392 is the Peptidase M12B domain; the sequence is RHIELAIVVD…KKPQCILNAP (196 aa). The Ca(2+) site is built by E200 and D284. Intrachain disulfides connect C308-C387, C349-C371, and C351-C354. Zn(2+) is bound at residue H333. Residue E334 is part of the active site. Residues H337 and H343 each coordinate Zn(2+). Residues C387 and N390 each coordinate Ca(2+). A propeptide spanning residues 393 to 410 is cleaved from the precursor; sequence LRTDTVSTPISGNEFLEA. The region spanning 400–481 is the Disintegrin domain; sequence TPISGNEFLE…ADCPRNGLYG (82 aa). 6 disulfide bridges follow: C414–C429, C416–C424, C423–C446, C437–C443, C442–C467, and C455–C474. Positions 459-461 match the Cell attachment site motif; the sequence is RGD.

This sequence belongs to the venom metalloproteinase (M12B) family. P-II subfamily. P-IIa sub-subfamily. As to quaternary structure, monomer. The cofactor is Zn(2+). Expressed by the venom gland.

Its subcellular location is the secreted. Impairs hemostasis in the envenomed animal. In terms of biological role, inhibits platelet aggregation induced by ADP and collagen. Acts by inhibiting fibrinogen interaction with platelet receptors GPIIb/GPIIIa (ITGA2B/ITGB3). Has antitumor-growth activity. The sequence is that of Zinc metalloproteinase/disintegrin from Protobothrops jerdonii (Jerdon's pitviper).